We begin with the raw amino-acid sequence, 235 residues long: Transcription factor MYB59 (235 aa).

2 consecutive HTH myb-type domains span residues 5–57 and 58–112; these read QEEY…VNYL and HPGL…RKKA. Positions 33-57 form a DNA-binding region, H-T-H motif; that stretch reads WDFVAKVSGLNRTGKSCRLRWVNYL. Positions 62 to 65 match the Bipartite nuclear localization signal 1 motif; that stretch reads KRGK. The H-T-H motif DNA-binding region spans 85–108; the sequence is WSKIARKLPGRTDNEIKNYWRTHM. A Bipartite nuclear localization signal 2 motif is present at residues 109–117; sequence RKKAQEKKR. Positions 109–147 are disordered; it reads RKKAQEKKRPMSPTSSSSNCCSSSMTTTTSQDTGGSNGK. The segment covering 119–138 has biased composition (low complexity); sequence MSPTSSSSNCCSSSMTTTTS.

As to expression, mainly expressed in leaves and seedlings, and to a lower extent, in roots, stems and inflorescences. Isoform MYB59-1 and isoform MYB59-2 are present in roots, leaves, and seedlings, while the expression of isoform MYB59-3 and isoform MYB59-4 is confined to seedlings.

The protein resides in the nucleus. Functionally, transcription factor. The polypeptide is Transcription factor MYB59 (MYB59) (Arabidopsis thaliana (Mouse-ear cress)).